Reading from the N-terminus, the 250-residue chain is Corrinoid adenosyltransferase MMAB (250 aa).

The N-terminal 32 residues, 1-32 (MAVCGLGSRLGLGSRLGLRGCFGAARLLYPRF), are a transit peptide targeting the mitochondrion. A disordered region spans residues 34–59 (SRGPQGVEDGDRPQPSSKTPRIPKIY). ATP-binding positions include 60–63 (TKTG), 68–69 (SS), and K78. S134 is subject to Phosphoserine. 190–194 (RRAER) serves as a coordination point for ATP. K211 is modified (N6-succinyllysine). Position 214 (N214) interacts with ATP. The residue at position 230 (K230) is an N6-acetyllysine; alternate. N6-succinyllysine; alternate is present on K230.

It belongs to the Cob(I)alamin adenosyltransferase family. As to quaternary structure, homotrimer. As to expression, expressed in liver and skeletal muscle.

The protein localises to the mitochondrion. The catalysed reaction is cob(I)alamin-[corrinoid adenosyltransferase] + ATP = apo-[corrinoid adenosyltransferase] + adenosylcob(III)alamin + triphosphate. Converts cob(I)alamin to adenosylcobalamin (adenosylcob(III)alamin), a coenzyme for methylmalonyl-CoA mutase, therefore participates in the final step of the vitamin B12 conversion. Generates adenosylcobalamin (AdoCbl) and directly delivers the cofactor to MUT in a transfer that is stimulated by ATP-binding to MMAB and gated by MMAA. The protein is Corrinoid adenosyltransferase MMAB of Homo sapiens (Human).